The chain runs to 37 residues: Lambda-hexatoxin-Hv1c (37 aa).

Intrachain disulfides connect cysteine 3-cysteine 17, cysteine 10-cysteine 22, cysteine 13-cysteine 14, and cysteine 16-cysteine 32.

It belongs to the neurotoxin 11 (kappa toxin) family. In terms of tissue distribution, expressed by the venom gland.

Its subcellular location is the secreted. Its function is as follows. This excitatory toxin inhibits insect calcium-activated potassium (KCa) channels (Slo-type). Pan-neuronal expression in Drosophila is lethal but flies engineered to express the toxin only in clock neurons have defects in circadian rhythm but a normal lifespan. In Hadronyche versuta (Blue mountains funnel-web spider), this protein is Lambda-hexatoxin-Hv1c.